The primary structure comprises 211 residues: Stromal cell-derived factor 2 (211 aa).

An N-terminal signal peptide occupies residues 1–18 (MAVVSLLLFGGLWSAVGS). 3 MIR domains span residues 21–75 (LAVV…IRGK), 83–138 (GTPI…VLCN), and 139–193 (GPYW…AMEG).

It localises to the secreted. The protein is Stromal cell-derived factor 2 (SDF2) of Bos taurus (Bovine).